A 91-amino-acid polypeptide reads, in one-letter code: MARVTVQDAVEKIGNRFDLVLVAARRARQIQSGGKDALVPEENDKVTVIALREIEEGLITNQILDVRERQEQQEQEAAEIQAVTAIAEGRR.

Belongs to the RNA polymerase subunit omega family. As to quaternary structure, the RNAP catalytic core consists of 2 alpha, 1 beta, 1 beta' and 1 omega subunit. When a sigma factor is associated with the core the holoenzyme is formed, which can initiate transcription.

The catalysed reaction is RNA(n) + a ribonucleoside 5'-triphosphate = RNA(n+1) + diphosphate. Functionally, promotes RNA polymerase assembly. Latches the N- and C-terminal regions of the beta' subunit thereby facilitating its interaction with the beta and alpha subunits. This Yersinia enterocolitica serotype O:8 / biotype 1B (strain NCTC 13174 / 8081) protein is DNA-directed RNA polymerase subunit omega.